The chain runs to 221 residues: Ribosomal RNA small subunit methyltransferase G 3 (221 aa).

S-adenosyl-L-methionine contacts are provided by residues Gly85, Phe90, 136–137 (IE), and Arg150.

It belongs to the methyltransferase superfamily. RNA methyltransferase RsmG family.

It localises to the cytoplasm. The catalysed reaction is guanosine(527) in 16S rRNA + S-adenosyl-L-methionine = N(7)-methylguanosine(527) in 16S rRNA + S-adenosyl-L-homocysteine. Functionally, specifically methylates the N7 position of guanine in position 527 of 16S rRNA. This chain is Ribosomal RNA small subunit methyltransferase G 3, found in Bdellovibrio bacteriovorus (strain ATCC 15356 / DSM 50701 / NCIMB 9529 / HD100).